Here is a 1185-residue protein sequence, read N- to C-terminus: CSTWGGGHFSTFDKYQYDFTGTCNYIFATVCDESSPDFNIQFRRGLDKKIARIIIELGPSVIIVEKDSISVRSVGVIKLPYASNGIQIAPYGRSVRLVAKLMEMELVVMWNNEDYLMVLTEKKYMGKTCGMCGNYDGYELNDFVSEGKLLDTYKFAALQKMDDPSEICLSEEISIPAIPHKKYAVICSQLLNLVSPTCSVPKDGFVTRCQLDMQDCSEPGQKNCTCSTLSEYSRQCAMSHQVVFNWRTENFCSVGKCSANQIYEECGSPCIKTCSNPEYSCSSHCTYGCFCPEGTVLDDISKNRTCVHLEQCPCTLNGETYAPGDTMKAACRTCKCTMGQWNCKELPCPGRCSLEGGSFVTTFDSRSYRFHGVCTYILMKSSSLPHNGTLMAIYEKSGYSHSETSLSAIIYLSTKDKIVISQNELLTDDDELKRLPYKSGDITIFKQSSMFIQMHTEFGLELVVQTSPVFQAYVKVSAQFQGRTLGLCGNYNGDTTDDFMTSMDITEGTASLFVDSWRAGNCLPAMERETDPCALSQLNKISAETHCSILTKKGTVFETCHAVVNPTPFYKRCVYQACNYEETFPYICSALGSYARTCSSMGLILENWRNSMDNCTITCTGNQTFSYNTQACERTCLSLSNPTLECHPTDIPIEGCNCPKGMYLNHKNECVRKSHCPCYLEDRKYILPDQSTMTGGITCYCVNGRLSCTGKLQNPAESCKAPKKYISCSDSLENKYGATCAPTCQMLATGIECIPTKCESGCVCADGLYENLDGRCVPPEECPCEYGGLSYGKGEQIQTECEICTCRKGKWKCVQKSRCSSTCNLYGEGHITTFDGQRFVFDGNCEYILAMDGCNVNRPLSSFKIVTENVICGKSGVTCSRSISIYLGNLTIILRDETYSISGKNLQVKYNVKKNALHLMFDIIIPGKYNMTLIWNKHMNFFIKISRETQETICGLCGNYNGNMKDDFETRSKYVASNELEFVNSWKENPLCGDVYFVVDPCSKNPYRKAWAEKTCSIINSQVFSACHNKVNRMPYYEACVRDSCGCDIGGDCECMCDAIAVYAMACLDKGICIDWRTPEFCPVYCEYYNSHRKTGSGGAYSYGSSVNCTWHYRPCNCPNQYYKYVNIEGCYNCSHDEYFDYEKEKCMPCAMQPTSVTLPTATQPTSPSTSSASTVLTETTNPPV.

Cystine bridges form between Cys-1–Cys-132 and Cys-23–Cys-168. The VWFD 1 domain maps to 1-169 (CSTWGGGHFS…KMDDPSEICL (169 aa)). Asn-223 carries N-linked (GlcNAc...) (complex) asparagine glycosylation. Residues 257–312 (CSANQIYEECGSPCIKTCSNPEYSCSSHCTYGCFCPEGTVLDDISKNRTCVHLEQC) enclose the TIL 1 domain. Residues 350-534 (GRCSLEGGSF…AMERETDPCA (185 aa)) form the VWFD 2 domain. 2 disulfide bridges follow: Cys-352–Cys-488 and Cys-374–Cys-533. 2 consecutive TIL domains span residues 619 to 676 (CTGN…KSHC) and 737 to 782 (GATC…PEEC). The 173-residue stretch at 821 to 993 (STCNLYGEGH…NSWKENPLCG (173 aa)) folds into the VWFD 3 domain. Disulfide bonds link Cys-823-Cys-957, Cys-845-Cys-992, Cys-854-Cys-954, and Cys-872-Cys-879. Asn-930 is a glycosylation site (N-linked (GlcNAc...) (complex) asparagine). The span at 1160-1178 (PTATQPTSPSTSSASTVLT) shows a compositional bias: low complexity. Residues 1160-1185 (PTATQPTSPSTSSASTVLTETTNPPV) are disordered.

In terms of assembly, multimer; disulfide-linked. N-glycosylated with N-acetylglucosamine (6.7%), N-acetylgalactosamine (0.6%), galactose (1.8%), mannose (4.6%), N-acetylneuraminic acid (1.0%) and sulfate-containing glycans (0.7%).

The protein resides in the secreted. Its function is as follows. Ovomucin, the glycoprotein responsible for the gel properties of egg white, is composed for 2 subunits, alpha-ovomucin/MUC5B and beta-ovomucin/MUC6. The chain is Mucin-6 (MUC6) from Gallus gallus (Chicken).